Reading from the N-terminus, the 107-residue chain is Proteinase inhibitor I-B (107 aa).

The signal sequence occupies residues 1-22 (MVKFAHVVAFLLLASLFQPLTA). A propeptide spanning residues 23-39 (RDLEINVLQLDVSQSGC) is cleaved from the precursor.

Belongs to the protease inhibitor I13 (potato type I serine protease inhibitor) family.

The protein resides in the secreted. The sequence is that of Proteinase inhibitor I-B (TIMPA) from Nicotiana tabacum (Common tobacco).